The following is a 455-amino-acid chain: tRNA modification GTPase MnmE (455 aa).

(6S)-5-formyl-5,6,7,8-tetrahydrofolate-binding residues include Arg-26, Glu-86, and Arg-125. The region spanning 222–376 (GLKTAIIGRP…VEEKINQIFF (155 aa)) is the TrmE-type G domain. Residue Asn-232 participates in K(+) binding. Residues 232–237 (NVGKSS), 251–257 (TDIAGTT), and 276–279 (DTAG) each bind GTP. Ser-236 provides a ligand contact to Mg(2+). Residues Thr-251, Ile-253, and Thr-256 each contribute to the K(+) site. Residue Thr-257 participates in Mg(2+) binding. Lys-455 serves as a coordination point for (6S)-5-formyl-5,6,7,8-tetrahydrofolate.

The protein belongs to the TRAFAC class TrmE-Era-EngA-EngB-Septin-like GTPase superfamily. TrmE GTPase family. Homodimer. Heterotetramer of two MnmE and two MnmG subunits. K(+) serves as cofactor.

It is found in the cytoplasm. In terms of biological role, exhibits a very high intrinsic GTPase hydrolysis rate. Involved in the addition of a carboxymethylaminomethyl (cmnm) group at the wobble position (U34) of certain tRNAs, forming tRNA-cmnm(5)s(2)U34. The protein is tRNA modification GTPase MnmE of Lactococcus lactis subsp. lactis (strain IL1403) (Streptococcus lactis).